The primary structure comprises 186 residues: MSQVEISELAKEIRASLKQFPNFPSEGILFEDFLPVFTKPDLFQKLVRAFQLHVGEQKVDYVVGLESRGFLFGPTLALALGAGFVPVRKAGKLPGPVFTAEFQKEYGSDKFQIQKDVIEEGAKVLIVDDILATGGSASSAGELVKQTGGDIVEYLFVMELDFLNGRDKLDKPAFTLLSGQAEKLQN.

132 to 136 (ATGGS) is a binding site for AMP.

The protein belongs to the purine/pyrimidine phosphoribosyltransferase family. Homodimer. Mg(2+) is required as a cofactor.

It is found in the cytoplasm. The protein localises to the nucleus. It catalyses the reaction AMP + diphosphate = 5-phospho-alpha-D-ribose 1-diphosphate + adenine. Its pathway is purine metabolism; AMP biosynthesis via salvage pathway; AMP from adenine: step 1/1. In terms of biological role, catalyzes a salvage reaction resulting in the formation of AMP, that is energically less costly than de novo synthesis. In Debaryomyces hansenii (strain ATCC 36239 / CBS 767 / BCRC 21394 / JCM 1990 / NBRC 0083 / IGC 2968) (Yeast), this protein is Adenine phosphoribosyltransferase (APT1).